A 124-amino-acid polypeptide reads, in one-letter code: Histone H2A, embryonic (124 aa).

Basic residues predominate over residues 1-18 (MSGRGKSGKARTKAKTRS). The interval 1-21 (MSGRGKSGKARTKAKTRSSRA) is disordered. An N-acetylserine modification is found at Ser2. A Phosphoserine modification is found at Ser2. Gln104 is modified (N5-methylglutamine). Residue Lys119 forms a Glycyl lysine isopeptide (Lys-Gly) (interchain with G-Cter in ubiquitin) linkage.

This sequence belongs to the histone H2A family. As to quaternary structure, the nucleosome is a histone octamer containing two molecules each of H2A, H2B, H3 and H4 assembled in one H3-H4 heterotetramer and two H2A-H2B heterodimers. The octamer wraps approximately 147 bp of DNA. Post-translationally, monoubiquitination of Lys-119 gives a specific tag for epigenetic transcriptional repression. In terms of processing, phosphorylation of Ser-2 directly represses transcription.

Its subcellular location is the nucleus. It localises to the chromosome. Its function is as follows. Core component of nucleosome. Nucleosomes wrap and compact DNA into chromatin, limiting DNA accessibility to the cellular machineries which require DNA as a template. Histones thereby play a central role in transcription regulation, DNA repair, DNA replication and chromosomal stability. DNA accessibility is regulated via a complex set of post-translational modifications of histones, also called histone code, and nucleosome remodeling. The chain is Histone H2A, embryonic from Psammechinus miliaris (Green sea urchin).